Here is an 82-residue protein sequence, read N- to C-terminus: Endocuticle structural glycoprotein SgAbd-5 (82 aa).

Glutamine 1 is subject to Pyrrolidone carboxylic acid. Positions 18–82 constitute a Chitin-binding type R&amp;R domain; it reads LGQYNFAYRT…ENGYQPRVQS (65 aa).

Component of the soft endocuticle of desert locust. The protein is Endocuticle structural glycoprotein SgAbd-5 of Schistocerca gregaria (Desert locust).